The chain runs to 289 residues: Pre-mRNA-splicing factor cwf23 (289 aa).

A J domain is found at 9–74; sequence DYYELLGINE…QLRKAYDSER (66 aa). The span at 129–148 shows a compositional bias: basic and acidic residues; the sequence is ESANLRRQRENRLREEQEQS. Disordered regions lie at residues 129-161 and 269-289; these read ESANLRRQRENRLREEQEQSKRRKQETPSSKIS and KQKHKQKQKENERKATSTMNA.

It belongs to the DnaJ family. As to quaternary structure, belongs to the 40S cdc5-associated complex (or cwf complex), a spliceosome sub-complex reminiscent of a late-stage spliceosome composed of the U2, U5 and U6 snRNAs and at least brr2, cdc5, cwf2/prp3, cwf3/syf1, cwf4/syf3, cwf5/ecm2, spp42/cwf6, cwf7/spf27, cwf8, cwf9, cwf10, cwf11, cwf12, prp45/cwf13, cwf14, cwf15, cwf16, cwf17, cwf18, cwf19, cwf20, cwf21, cwf22, cwf23, cwf24, cwf25, cwf26, cyp7/cwf27, cwf28, cwf29/ist3, lea1, msl1, prp5/cwf1, prp10, prp12/sap130, prp17, prp22, sap61, sap62, sap114, sap145, slu7, smb1, smd1, smd3, smf1, smg1 and syf2.

The protein localises to the cytoplasm. It is found in the nucleus. In terms of biological role, involved in pre-mRNA splicing. May be involved in endoplasmic reticulum-associated protein degradation (ERAD) and required for growth at low and high temperatures. The polypeptide is Pre-mRNA-splicing factor cwf23 (cwf23) (Schizosaccharomyces pombe (strain 972 / ATCC 24843) (Fission yeast)).